The chain runs to 404 residues: Metacaspase-1A (404 aa).

The segment covering 1 to 10 (MNPHHSHHHS) has biased composition (basic residues). Residues 1–100 (MNPHHSHHHS…PSDPVSFGQG (100 aa)) are disordered. The segment covering 24-51 (QQQPPSNPYQYNQPSPQPYQGSQPPQNG) has biased composition (low complexity). Active-site residues include His-200 and Cys-256.

Belongs to the peptidase C14B family.

In terms of biological role, involved in cell death (apoptosis). In Aspergillus niger (strain ATCC MYA-4892 / CBS 513.88 / FGSC A1513), this protein is Metacaspase-1A (casA).